Consider the following 82-residue polypeptide: U16-lycotoxin-Ls1b (82 aa).

Positions 1–22 are cleaved as a signal peptide; sequence MSPKVQALLLLVGLITFLEVHA. The propeptide occupies 23 to 34; sequence EEELSETVESER. 4 cysteine pairs are disulfide-bonded: Cys36-Cys51, Cys43-Cys56, Cys50-Cys67, and Cys58-Cys65.

This sequence belongs to the neurotoxin 02 (plectoxin) family. 04 (U16-lycotoxin) subfamily. Expressed by the venom gland.

The protein localises to the secreted. The protein is U16-lycotoxin-Ls1b of Lycosa singoriensis (Wolf spider).